The following is a 1345-amino-acid chain: Aldehyde oxidase 2 (1345 aa).

The 88-residue stretch at 9–96 folds into the 2Fe-2S ferredoxin-type domain; the sequence is DELEFFVNGK…GAAVTTVEGV (88 aa). [2Fe-2S] cluster is bound by residues Cys48, Cys53, Cys56, and Cys78. A Mo-molybdopterin-binding site is contributed by Gln117. Positions 118, 121, 153, and 155 each coordinate [2Fe-2S] cluster. Cys155 is a Mo-molybdopterin binding site. The 186-residue stretch at 238-423 folds into the FAD-binding PCMH-type domain; sequence FYGERITWIA…GSVYIPHSQK (186 aa). FAD contacts are provided by residues 266 to 273, Ala347, Ser356, His360, Asp369, and Leu413; that span reads LISGNTAL. Mo-molybdopterin is bound by residues 812-813, 1094-1097, Gln1209, and Leu1274; these read GF and ASVG. Residue Glu1276 is the Proton acceptor; for azaheterocycle hydroxylase activity of the active site.

This sequence belongs to the xanthine dehydrogenase family. As to quaternary structure, homodimer. It depends on [2Fe-2S] cluster as a cofactor. FAD serves as cofactor. Requires Mo-molybdopterin as cofactor.

It is found in the cytoplasm. It catalyses the reaction an aldehyde + O2 + H2O = a carboxylate + H2O2 + H(+). Its function is as follows. Oxidase with broad substrate specificity, oxidizing aromatic azaheterocycles, such as phthalazine, as well as aldehydes, such as benzaldehyde and retinal. The sequence is that of Aldehyde oxidase 2 (Aox2) from Rattus norvegicus (Rat).